The sequence spans 334 residues: Holliday junction branch migration complex subunit RuvB (334 aa).

The tract at residues 4-184 (ADRIISASPQ…FGIVQRLEFY (181 aa)) is large ATPase domain (RuvB-L). Residues Ile-23, Arg-24, Gly-65, Lys-68, Thr-69, Thr-70, 131–133 (EDY), Arg-174, Tyr-184, and Arg-221 each bind ATP. Mg(2+) is bound at residue Thr-69. The tract at residues 185 to 255 (NVDDLTSIVK…IAKQALVMLD (71 aa)) is small ATPAse domain (RuvB-S). Residues 258 to 334 (PQGFDFMDIK…YAHLGISLSE (77 aa)) form a head domain (RuvB-H) region. The DNA site is built by Arg-294, Arg-313, and Arg-318.

It belongs to the RuvB family. In terms of assembly, homohexamer. Forms an RuvA(8)-RuvB(12)-Holliday junction (HJ) complex. HJ DNA is sandwiched between 2 RuvA tetramers; dsDNA enters through RuvA and exits via RuvB. An RuvB hexamer assembles on each DNA strand where it exits the tetramer. Each RuvB hexamer is contacted by two RuvA subunits (via domain III) on 2 adjacent RuvB subunits; this complex drives branch migration. In the full resolvosome a probable DNA-RuvA(4)-RuvB(12)-RuvC(2) complex forms which resolves the HJ.

The protein localises to the cytoplasm. The enzyme catalyses ATP + H2O = ADP + phosphate + H(+). The RuvA-RuvB-RuvC complex processes Holliday junction (HJ) DNA during genetic recombination and DNA repair, while the RuvA-RuvB complex plays an important role in the rescue of blocked DNA replication forks via replication fork reversal (RFR). RuvA specifically binds to HJ cruciform DNA, conferring on it an open structure. The RuvB hexamer acts as an ATP-dependent pump, pulling dsDNA into and through the RuvAB complex. RuvB forms 2 homohexamers on either side of HJ DNA bound by 1 or 2 RuvA tetramers; 4 subunits per hexamer contact DNA at a time. Coordinated motions by a converter formed by DNA-disengaged RuvB subunits stimulates ATP hydrolysis and nucleotide exchange. Immobilization of the converter enables RuvB to convert the ATP-contained energy into a lever motion, pulling 2 nucleotides of DNA out of the RuvA tetramer per ATP hydrolyzed, thus driving DNA branch migration. The RuvB motors rotate together with the DNA substrate, which together with the progressing nucleotide cycle form the mechanistic basis for DNA recombination by continuous HJ branch migration. Branch migration allows RuvC to scan DNA until it finds its consensus sequence, where it cleaves and resolves cruciform DNA. The protein is Holliday junction branch migration complex subunit RuvB of Haemophilus ducreyi (strain 35000HP / ATCC 700724).